We begin with the raw amino-acid sequence, 430 residues long: Asparagine--tRNA ligase (430 aa).

It belongs to the class-II aminoacyl-tRNA synthetase family. Homodimer.

Its subcellular location is the cytoplasm. It carries out the reaction tRNA(Asn) + L-asparagine + ATP = L-asparaginyl-tRNA(Asn) + AMP + diphosphate + H(+). The sequence is that of Asparagine--tRNA ligase from Staphylococcus aureus (strain USA300).